Reading from the N-terminus, the 303-residue chain is MTENPVSDRLSTAAEKASVLIEALPWLQRFHGATVVVKYGGNAMIDDELKTAFAQDMVFLRLAGLHPVVVHGGGPQITAMLERLGMQGEFRGGLRVTTPETMDVVRMVLFGQVGRELVGLINQHGPHAVGMSGEDAGLFTARRRTATVDGEAVDVGLVGDVVSVNPDAVLDLIRAGRIPVVSTIAPDPDGVVHNVNADTAAGALAEALGAEKLVVLTDVEGLYTDWPDRSSLVTRLDADELEALLPGLASGMVPKMEACLRAVRGGVPRAHVIDGRLAHSVLLEVFTSAGVGTMVLPAGTGEK.

Substrate is bound by residues 73–74, arginine 95, and asparagine 194; that span reads GG.

It belongs to the acetylglutamate kinase family. ArgB subfamily.

It is found in the cytoplasm. It carries out the reaction N-acetyl-L-glutamate + ATP = N-acetyl-L-glutamyl 5-phosphate + ADP. It participates in amino-acid biosynthesis; L-arginine biosynthesis; N(2)-acetyl-L-ornithine from L-glutamate: step 2/4. Functionally, catalyzes the ATP-dependent phosphorylation of N-acetyl-L-glutamate. This is Acetylglutamate kinase from Saccharopolyspora erythraea (strain ATCC 11635 / DSM 40517 / JCM 4748 / NBRC 13426 / NCIMB 8594 / NRRL 2338).